Reading from the N-terminus, the 598-residue chain is UvrABC system protein C (598 aa).

In terms of domain architecture, GIY-YIG spans 14-91; that stretch reads DSPGCYLHKD…IQKNMPKYNI (78 aa). A UVR domain is found at 196–231; it reads DKIIEDLRSKMLAASEEMAFERAAEYRDLISGIATM.

The protein belongs to the UvrC family. In terms of assembly, interacts with UvrB in an incision complex.

Its subcellular location is the cytoplasm. The UvrABC repair system catalyzes the recognition and processing of DNA lesions. UvrC both incises the 5' and 3' sides of the lesion. The N-terminal half is responsible for the 3' incision and the C-terminal half is responsible for the 5' incision. This Streptococcus pyogenes serotype M6 (strain ATCC BAA-946 / MGAS10394) protein is UvrABC system protein C.